The following is a 151-amino-acid chain: 3-hydroxyacyl-thioester dehydratase Z (151 aa).

In terms of domain architecture, MaoC-like spans 11–131 (AAAAGEKVGQ…TVQATVSTTV (121 aa)). Substrate is bound by residues 60–63 (IAHG), 86–89 (AINY), 97–99 (PAP), Q124, and R148.

It belongs to the enoyl-CoA hydratase/isomerase family. In terms of assembly, homodimer.

It carries out the reaction a (3R)-3-hydroxyacyl-CoA = a (2E)-enoyl-CoA + H2O. Functionally, shows trans-enoyl-CoA hydratase/3-hydroxyacyl-CoA dehydratase activity. The sequence is that of 3-hydroxyacyl-thioester dehydratase Z from Mycobacterium bovis (strain ATCC BAA-935 / AF2122/97).